Reading from the N-terminus, the 606-residue chain is Peptide-N(4)-(N-acetyl-beta-glucosaminyl)asparagine amidase (606 aa).

One can recognise a Thioredoxin domain in the interval 2 to 108; sequence PVTEVGSLPE…IAEKIRQHYS (107 aa). Positions 191, 194, 225, and 228 each coordinate Zn(2+). Cys251 serves as the catalytic Nucleophile. Residues His278 and Asp295 contribute to the active site. Positions 404–606 constitute a PAW domain; sequence DLGGRITGSE…SFSVKIWMKN (203 aa).

The protein belongs to the transglutaminase-like superfamily. PNGase family. Zn(2+) serves as cofactor.

The protein resides in the cytoplasm. The protein localises to the endoplasmic reticulum. The catalysed reaction is Hydrolysis of an N(4)-(acetyl-beta-D-glucosaminyl)asparagine residue in which the glucosamine residue may be further glycosylated, to yield a (substituted) N-acetyl-beta-D-glucosaminylamine and a peptide containing an aspartate residue.. With respect to regulation, inhibited by Zn(2+) and z-VAD-fmk (caspase inhibitor) but unaffected by EDTA. Functionally, specifically deglycosylates the denatured form of N-linked glycoproteins in the cytoplasm and assists their proteasome-mediated degradation. Cleaves the beta-aspartyl-glucosamine (GlcNAc) of the glycan and the amide side chain of Asn, converting Asn to Asp. Prefers proteins containing high-mannose over those bearing complex type oligosaccharides. Can recognize misfolded proteins in the endoplasmic reticulum that are exported to the cytosol to be destroyed and deglycosylate them, while it has no activity toward native proteins. Deglycosylation is a prerequisite for subsequent proteasome-mediated degradation of some, but not all, misfolded glycoproteins. Also displays oxidoreductase (thioredoxin) activity. Involved in regulating the expression of proteasomal subunits such as rpt-3 in order to confer resistance to proteasomal dysfunction. This Caenorhabditis elegans protein is Peptide-N(4)-(N-acetyl-beta-glucosaminyl)asparagine amidase (png-1).